The primary structure comprises 273 residues: Medium-wave-sensitive opsin 1 (273 aa).

At 1–5 the chain is on the extracellular side; it reads APRWV. Residues 6 to 30 form a helical membrane-spanning segment; the sequence is YHLTSAWMVFVVIASVFTNGLVLAA. The Cytoplasmic segment spans residues 31–42; that stretch reads TMRFKKLRHPLN. The chain crosses the membrane as a helical span at residues 43–68; that stretch reads WILVNLAIADLVETIIASTISVVNQM. Residues 69–82 are Extracellular-facing; the sequence is YGYFVLGHPLCVVE. An intrachain disulfide couples Cys-79 to Cys-156. A helical membrane pass occupies residues 83–102; sequence GYTASLCGITGLWSLAIISW. At 103 to 121 the chain is on the cytoplasmic side; the sequence is ERWMVVCRPFGNVRFDAKL. The helical transmembrane segment at 122–145 threads the bilayer; it reads AIAGIAFSWIWAAVWTAPPIFGWS. Residues 146–171 are Extracellular-facing; the sequence is RYWPHGLKTSCGPDVFSGSSYPGVQS. A helical transmembrane segment spans residues 172–199; that stretch reads YMIVLMITCCFIPLSVIVLCYLQVWLAI. Topologically, residues 200–221 are cytoplasmic; that stretch reads RAVAKQQKESESTQKAEKEVTR. Residues 222-245 traverse the membrane as a helical segment; it reads MVMVMIFAFCLCWGPYAFFACFAA. Residues 246-253 lie on the Extracellular side of the membrane; sequence AHPGYAFH. A helical transmembrane segment spans residues 254 to 273; the sequence is PLVAALPAYFAKSATIYNPI. N6-(retinylidene)lysine is present on Lys-265.

This sequence belongs to the G-protein coupled receptor 1 family. Opsin subfamily. In terms of assembly, monomer. Homodimer. Homotetramer. O-glycosylated. In terms of processing, phosphorylated on some or all of the serine and threonine residues present in the C-terminal region. As to expression, the three color pigments are found in the cone photoreceptor cells.

The protein localises to the membrane. In terms of biological role, visual pigments are the light-absorbing molecules that mediate vision. They consist of an apoprotein, opsin, covalently linked to cis-retinal. The chain is Medium-wave-sensitive opsin 1 (OPN1MW) from Odocoileus virginianus virginianus (Virginia white-tailed deer).